The following is a 193-amino-acid chain: Probable 3' cyclic ADP-D-ribose synthase ThsB' (193 aa).

In terms of assembly, homodimer.

The enzyme catalyses NAD(+) = 3'cADPR + nicotinamide + H(+). Its function is as follows. TIR-like domain-containing component of the Thoeris antiviral defense system, composed of ThsA and ThsB and ThsB'. In the presence of NAD(+) produces a signaling molecule that activates cognate ThsA (AC J8G6Z1) to hydrolyze NAD(+). The signaling molecule is a cyclic ADP-D-ribose isomer and may be 3' cyclic ADP-D-ribose (3'cADPR); it is not 2'cADPR. The polypeptide is Probable 3' cyclic ADP-D-ribose synthase ThsB' (Bacillus cereus (strain MSX-D12)).